Reading from the N-terminus, the 435-residue chain is Galactose/lactose metabolism regulatory protein GAL80 (435 aa).

Met1 bears the N-acetylmethionine mark.

This sequence to K.lactis GAL80. As to quaternary structure, monomer.

This protein is a negative regulator for the gene expression of the lactose/galactose metabolic genes. It binds to GAL4 and so blocks transcriptional activation by it, in the absence of an inducing sugar. This Saccharomyces cerevisiae (strain ATCC 204508 / S288c) (Baker's yeast) protein is Galactose/lactose metabolism regulatory protein GAL80 (GAL80).